The following is a 461-amino-acid chain: Serine incorporator 5 (461 aa).

Residues 1–36 lie on the Extracellular side of the membrane; the sequence is MSARCCAGQLACCCGSAGCSLCCGCCPKFRQSRTTR. The helical transmembrane segment at 37–57 threads the bilayer; it reads FMYLFYFILVIALCCVMMTPS. Over 58–90 the chain is Cytoplasmic; that stretch reads VMKQVKDHIPFFEEFCKKTQAGGDACENLVGYS. A helical transmembrane segment spans residues 91-111; it reads AVYRVCFGMACFFALFCLLTL. The Extracellular segment spans residues 112-125; it reads KVNNSKSCRAYIHN. Asn-114 is a glycosylation site (N-linked (GlcNAc...) asparagine). A helical membrane pass occupies residues 126-146; the sequence is GFWFFKLLLLGAMCSGAFFIP. The Cytoplasmic portion of the chain corresponds to 147–157; that stretch reads DQETFLKVWRY. Residues 158 to 178 form a helical membrane-spanning segment; that stretch reads VGAGGSFLFICIQLLLIVQFA. The Extracellular portion of the chain corresponds to 179-200; it reads HKWNKNWTAGTVRNKLWYASLS. The N-linked (GlcNAc...) asparagine glycan is linked to Asn-184. A helical transmembrane segment spans residues 201–221; that stretch reads LVTLIMYSVAVGGLALMAVFY. Topologically, residues 222 to 231 are cytoplasmic; it reads TQWDDCMDNK. A helical transmembrane segment spans residues 232 to 252; sequence ILLGVHGGLCVLISLVAISPC. Residues 253–260 are Extracellular-facing; the sequence is VQNRQPHS. The chain crosses the membrane as a helical span at residues 261-281; sequence GLLQSGLISCYVTYLTFSALT. Topologically, residues 282 to 312 are cytoplasmic; that stretch reads SKPEKKVLDEHGKNVTICAPDFGQDLHRDEN. Residues 313 to 333 traverse the membrane as a helical segment; that stretch reads MVTWLGTLLLIVCISYSCLTS. Residues 334–392 lie on the Extracellular side of the membrane; sequence TTRSSSDALQSRYGAPELEVARCCFCFGPDGEDTEEQQNVKKGPRVIYDEKKGTVYSYS. Residues 393 to 413 form a helical membrane-spanning segment; sequence YFHFVFFLASLYVMMTLTSWF. Residues 414-422 are Cytoplasmic-facing; it reads HYENATIKT. The helical transmembrane segment at 423-443 threads the bilayer; that stretch reads FFSGWSVFWVKMASCWMCVLL. The Extracellular portion of the chain corresponds to 444-461; it reads YLQTLVAPLCCPSRQFSV.

This sequence belongs to the TDE1 family.

The protein resides in the cell membrane. The catalysed reaction is a 1,2-diacyl-sn-glycero-3-phospho-L-serine(in) = a 1,2-diacyl-sn-glycero-3-phospho-L-serine(out). The enzyme catalyses a 1,2-diacyl-sn-glycero-3-phosphocholine(in) = a 1,2-diacyl-sn-glycero-3-phosphocholine(out). It carries out the reaction a 1,2-diacyl-sn-glycero-3-phosphoethanolamine(in) = a 1,2-diacyl-sn-glycero-3-phosphoethanolamine(out). In terms of biological role, restriction factor required to restrict infectivity of gammaretroviruses: acts by inhibiting an early step of viral infection. Impairs the penetration of the viral particle into the cytoplasm. Non-ATP-dependent, non-specific lipid transporter for phosphatidylserine, phosphatidylcholine, and phosphatidylethanolamine. Functions as a scramblase that flips lipids in both directions across the membrane. Phospholipid scrambling results in gammaretroviral surface exposure of phosphatidylserine and loss of membrane asymmetry, which leads to loss of infectivity. Enhances the incorporation of serine into phosphatidylserine and sphingolipids. May play a role in providing serine molecules for the formation of myelin glycosphingolipids in oligodendrocytes. The sequence is that of Serine incorporator 5 (Serinc5) from Mus musculus (Mouse).